The primary structure comprises 1093 residues: GPI ethanolamine phosphate transferase 3, catalytic subunit (1093 aa).

The chain crosses the membrane as a helical span at residues 4–24; that stretch reads VSVLLFLAWVCFLFYAGIALF. The N-linked (GlcNAc...) asparagine glycan is linked to N268. 9 helical membrane-spanning segments follow: residues 460 to 480, 483 to 503, 512 to 532, 669 to 689, 702 to 722, 748 to 768, 831 to 851, 856 to 876, and 945 to 965; these read AAAC…GFLF, LLLI…GVSV, VVLG…KAWV, LWYG…RLWL, VLFV…YWAL, VMGL…TVLV, SVYS…LMLL, VSLV…LLAA, and FASH…PFLC. The segment at 971-991 is disordered; that stretch reads KRRQPLPGSESEARVRPEEEE. Helical transmembrane passes span 1018 to 1038 and 1052 to 1072; these read LKYL…ASIL and FIFE…GIAL.

The protein belongs to the PIGG/PIGN/PIGO family. PIGO subfamily. Forms the ethanolamine phosphate transferase 3 complex composed by PIGO and PIGF. PIGF is required to stabilize PIGO.

It localises to the endoplasmic reticulum membrane. The protein operates within glycolipid biosynthesis; glycosylphosphatidylinositol-anchor biosynthesis. Its function is as follows. Catalytic subunit of the ethanolamine phosphate transferase 3 complex that transfers an ethanolamine phosphate (EtNP) from a phosphatidylethanolamine (PE) to the 6-OH position of the third alpha-1,2-linked mannose of the an alpha-D-Man-(1-&gt;2)-alpha-D-Man-(1-&gt;6)-2-PEtn-alpha-D-Man-(1-&gt;4)-alpha-D-GlcN-(1-&gt;6)-(1-radyl,2-acyl-sn-glycero-3-phospho)-2-acyl-inositol (also termed H6) intermediate to generate a 6-PEtn-alpha-D-Man-(1-&gt;2)-alpha-D-Man-(1-&gt;6)-2-PEtn-alpha-D-Man-(1-&gt;4)-alpha-D-GlcN-(1-&gt;6)-(1-radyl,2-acyl-sn-glycero-3-phospho)-2-acyl-inositol (also termed H7) and participates in the tenth step of the glycosylphosphatidylinositol-anchor biosynthesis. This chain is GPI ethanolamine phosphate transferase 3, catalytic subunit, found in Mus musculus (Mouse).